Here is a 1759-residue protein sequence, read N- to C-terminus: Protein TIC 214 (1759 aa).

Helical transmembrane passes span 23–45, 64–84, 129–149, 172–192, and 221–241; these read VVVG…LFLL, FITG…HLAL, IFFQ…SSIF, IGWI…LICI, and IFVV…PPPF.

This sequence belongs to the TIC214 family. In terms of assembly, part of the Tic complex.

The protein resides in the plastid. Its subcellular location is the chloroplast inner membrane. Involved in protein precursor import into chloroplasts. May be part of an intermediate translocation complex acting as a protein-conducting channel at the inner envelope. The protein is Protein TIC 214 of Phaseolus vulgaris (Kidney bean).